The primary structure comprises 169 residues: uncharacterized protein (169 aa).

This is an uncharacterized protein from Saimiriine herpesvirus 2 (strain 11) (SaHV-2).